Here is a 353-residue protein sequence, read N- to C-terminus: Photosystem II D2 protein (353 aa).

Position 2 is an N-acetylthreonine (threonine 2). Threonine 2 is subject to Phosphothreonine. A helical membrane pass occupies residues 41–61; it reads CAYFALGGWLTGTTFVTSWYT. Histidine 118 serves as a coordination point for chlorophyll a. A helical membrane pass occupies residues 125–141; the sequence is GFMLRQFELARSVQLRP. Pheophytin a contacts are provided by glutamine 130 and asparagine 143. The chain crosses the membrane as a helical span at residues 153–166; the sequence is VFVSVFLIYPLGQS. Residue histidine 198 coordinates chlorophyll a. Residues 208–228 traverse the membrane as a helical segment; that stretch reads AALLCAIHGATVENTLFEDGD. The a plastoquinone site is built by histidine 215 and phenylalanine 262. Position 215 (histidine 215) interacts with Fe cation. Histidine 269 serves as a coordination point for Fe cation. A helical membrane pass occupies residues 279-295; that stretch reads GLWMSAIGVVGLALNLR.

The protein belongs to the reaction center PufL/M/PsbA/D family. PSII is composed of 1 copy each of membrane proteins PsbA, PsbB, PsbC, PsbD, PsbE, PsbF, PsbH, PsbI, PsbJ, PsbK, PsbL, PsbM, PsbT, PsbX, PsbY, PsbZ, Psb30/Ycf12, at least 3 peripheral proteins of the oxygen-evolving complex and a large number of cofactors. It forms dimeric complexes. The cofactor is The D1/D2 heterodimer binds P680, chlorophylls that are the primary electron donor of PSII, and subsequent electron acceptors. It shares a non-heme iron and each subunit binds pheophytin, quinone, additional chlorophylls, carotenoids and lipids. There is also a Cl(-1) ion associated with D1 and D2, which is required for oxygen evolution. The PSII complex binds additional chlorophylls, carotenoids and specific lipids..

The protein resides in the plastid. It localises to the chloroplast thylakoid membrane. It carries out the reaction 2 a plastoquinone + 4 hnu + 2 H2O = 2 a plastoquinol + O2. Its function is as follows. Photosystem II (PSII) is a light-driven water:plastoquinone oxidoreductase that uses light energy to abstract electrons from H(2)O, generating O(2) and a proton gradient subsequently used for ATP formation. It consists of a core antenna complex that captures photons, and an electron transfer chain that converts photonic excitation into a charge separation. The D1/D2 (PsbA/PsbD) reaction center heterodimer binds P680, the primary electron donor of PSII as well as several subsequent electron acceptors. D2 is needed for assembly of a stable PSII complex. The sequence is that of Photosystem II D2 protein from Zygnema circumcarinatum (Green alga).